The sequence spans 196 residues: Probable GTP-binding protein EngB (196 aa).

Positions 22 to 193 (SLPEVAFVGR…LEEIRKAKGE (172 aa)) constitute an EngB-type G domain. GTP is bound by residues 30 to 37 (GRSNVGKS), 57 to 61 (GRTQL), 75 to 78 (DLPG), 142 to 145 (TKSD), and 172 to 174 (FSA). Mg(2+)-binding residues include S37 and T59.

This sequence belongs to the TRAFAC class TrmE-Era-EngA-EngB-Septin-like GTPase superfamily. EngB GTPase family. It depends on Mg(2+) as a cofactor.

In terms of biological role, necessary for normal cell division and for the maintenance of normal septation. This Syntrophus aciditrophicus (strain SB) protein is Probable GTP-binding protein EngB.